The chain runs to 184 residues: Alpha-tubulin N-acetyltransferase (184 aa).

The region spanning 1–174 (MNIPPEKMHN…NNFVIFAEYF (174 aa)) is the N-acetyltransferase domain. Acetyl-CoA is bound by residues 108 to 121 (FYIQ…GLGL) and 144 to 153 (SYKLQSFLKK).

The protein belongs to the acetyltransferase ATAT1 family.

The catalysed reaction is L-lysyl-[alpha-tubulin] + acetyl-CoA = N(6)-acetyl-L-lysyl-[alpha-tubulin] + CoA + H(+). Its function is as follows. Specifically acetylates 'Lys-40' in alpha-tubulin on the lumenal side of microtubules. Promotes microtubule destabilization and accelerates microtubule dynamics; this activity may be independent of acetylation activity. Acetylates alpha-tubulin with a slow enzymatic rate, due to a catalytic site that is not optimized for acetyl transfer. Enters the microtubule through each end and diffuses quickly throughout the lumen of microtubules. Acetylates only long/old microtubules because of its slow acetylation rate since it does not have time to act on dynamically unstable microtubules before the enzyme is released. In Plasmodium knowlesi (strain H), this protein is Alpha-tubulin N-acetyltransferase.